A 422-amino-acid chain; its full sequence is Exodeoxyribonuclease 7 large subunit (422 aa).

It belongs to the XseA family. Heterooligomer composed of large and small subunits.

Its subcellular location is the cytoplasm. It catalyses the reaction Exonucleolytic cleavage in either 5'- to 3'- or 3'- to 5'-direction to yield nucleoside 5'-phosphates.. Bidirectionally degrades single-stranded DNA into large acid-insoluble oligonucleotides, which are then degraded further into small acid-soluble oligonucleotides. This chain is Exodeoxyribonuclease 7 large subunit, found in Leptospira borgpetersenii serovar Hardjo-bovis (strain JB197).